A 511-amino-acid polypeptide reads, in one-letter code: Probable G-protein coupled receptor 101 (511 aa).

The Extracellular portion of the chain corresponds to 1–35 (MPPSCTNSTQENNGSRVCLPLSKMPISVAHGIIRS). N-linked (GlcNAc...) asparagine glycosylation is found at asparagine 7 and asparagine 13. A helical transmembrane segment spans residues 36-56 (VVLLVILGVAFLGNVVLGYVL). Residues 57 to 67 (HRKPNLLQVTN) are Cytoplasmic-facing. A helical transmembrane segment spans residues 68-90 (RFIFNLLVTDLLQVALVAPWVVS). Topologically, residues 91–106 (TAIPFFWPLNIHFCTA) are extracellular. The cysteines at positions 104 and 182 are disulfide-linked. A helical membrane pass occupies residues 107–127 (LVSLTHLFAFASVNTIVVVSV). The Cytoplasmic segment spans residues 128–149 (DRYLTIIHPLSYPSKMTNRRSY). The chain crosses the membrane as a helical span at residues 150–170 (ILLYGTWIAAFLQSTPPLYGW). The Extracellular segment spans residues 171 to 196 (GHATFDDRNAFCSMIWGASPAYTVVS). Residues 197 to 217 (VVSFLVIPLGVMIACYSVVFG) traverse the membrane as a helical segment. Over 218 to 398 (AARRQQALLY…PPCYECKAAR (181 aa)) the chain is Cytoplasmic. Residues 240–261 (DSVVHENEEGAKKRDEFQDKNE) show a composition bias toward basic and acidic residues. Disordered regions lie at residues 240 to 315 (DSVV…EVSN) and 367 to 386 (EAMR…TSDP). The span at 376 to 385 (PPSRRNSTSD) shows a compositional bias: polar residues. A helical membrane pass occupies residues 399 to 419 (VIFVIISTYVLSLGPYCFLAV). Residues 420-432 (LAVWVDIDTRVPQ) lie on the Extracellular side of the membrane. The chain crosses the membrane as a helical span at residues 433–453 (WVITIIIWLFFLQCCIHPYVY). The Cytoplasmic portion of the chain corresponds to 454-511 (GYMHKSIKKEIQEVLKKLICKKSPPVEDSHPDLHETEAGTEGGIEGKAVPSHDSATSP). Positions 476 to 511 (SPPVEDSHPDLHETEAGTEGGIEGKAVPSHDSATSP) are disordered. The span at 477–490 (PPVEDSHPDLHETE) shows a compositional bias: basic and acidic residues.

The protein belongs to the G-protein coupled receptor 1 family. In terms of tissue distribution, expressed in the brain in hypothalamus.

The protein resides in the cell membrane. In terms of biological role, orphan receptor. The sequence is that of Probable G-protein coupled receptor 101 (Gpr101) from Mus musculus (Mouse).